The chain runs to 582 residues: Putative BTB/POZ domain-containing protein At3g08660 (582 aa).

The disordered stretch occupies residues 1 to 21; that stretch reads MGSDSTLSLPSSSPPCNNRSS. The BTB domain maps to 36-103; sequence GDIIVVVDGE…CYGINFDITA (68 aa). Positions 196–466 constitute an NPH3 domain; that stretch reads EMWTEELSAL…VRVLYTEQLR (271 aa). Y407 is subject to Phosphotyrosine. Residues 558-582 are disordered; sequence GGETRQKVNRKSRSVSERKSSRSGR. Over residues 571–582 the composition is skewed to basic and acidic residues; that stretch reads SVSERKSSRSGR.

Belongs to the NPH3 family.

It functions in the pathway protein modification; protein ubiquitination. Its function is as follows. May act as a substrate-specific adapter of an E3 ubiquitin-protein ligase complex (CUL3-RBX1-BTB) which mediates the ubiquitination and subsequent proteasomal degradation of target proteins. The polypeptide is Putative BTB/POZ domain-containing protein At3g08660 (Arabidopsis thaliana (Mouse-ear cress)).